Consider the following 88-residue polypeptide: UPF0213 protein EF_2693 (88 aa).

In terms of domain architecture, GIY-YIG spans 5-82 (KSHYFYVLLC…KKLTRKQKEQ (78 aa)).

It belongs to the UPF0213 family.

The protein is UPF0213 protein EF_2693 of Enterococcus faecalis (strain ATCC 700802 / V583).